The following is a 263-amino-acid chain: Endonuclease 8 (263 aa).

Pro2 serves as the catalytic Schiff-base intermediate with DNA. The active-site Proton donor is Glu3. The Proton donor; for beta-elimination activity role is filled by Lys53. Gln70, Arg125, and Asn169 together coordinate DNA. An FPG-type zinc finger spans residues 229–263; it reads KVFHRDGEPCERCGSIIEKTTLSSRPFYWCPGCQH. Arg253 (proton donor; for delta-elimination activity) is an active-site residue.

It belongs to the FPG family. Zn(2+) is required as a cofactor.

The enzyme catalyses 2'-deoxyribonucleotide-(2'-deoxyribose 5'-phosphate)-2'-deoxyribonucleotide-DNA = a 3'-end 2'-deoxyribonucleotide-(2,3-dehydro-2,3-deoxyribose 5'-phosphate)-DNA + a 5'-end 5'-phospho-2'-deoxyribonucleoside-DNA + H(+). Functionally, involved in base excision repair of DNA damaged by oxidation or by mutagenic agents. Acts as a DNA glycosylase that recognizes and removes damaged bases. Has a preference for oxidized pyrimidines, such as thymine glycol, 5,6-dihydrouracil and 5,6-dihydrothymine. Has AP (apurinic/apyrimidinic) lyase activity and introduces nicks in the DNA strand. Cleaves the DNA backbone by beta-delta elimination to generate a single-strand break at the site of the removed base with both 3'- and 5'-phosphates. In Escherichia coli O17:K52:H18 (strain UMN026 / ExPEC), this protein is Endonuclease 8.